A 570-amino-acid chain; its full sequence is Peptidyl-prolyl cis-trans isomerase CYP63 (570 aa).

Residues 10–174 (FLDVSIGGDP…SPVKIIDCGE (165 aa)) form the PPIase cyclophilin-type domain. The interval 180-570 (AHDAAEREKG…GKRGLVSYAD (391 aa)) is disordered. The segment covering 203–219 (VSDREAKETRKKESNEK) has biased composition (basic and acidic residues). 2 stretches are compositionally biased toward low complexity: residues 229 to 238 (SSDSYSSSSD) and 246 to 259 (EAYS…SSSS). The span at 262 to 292 (KHRKRKSTTRHKGRRGERKSKGRSGKKKARP) shows a compositional bias: basic residues. Positions 297-309 (STNSSSDTESSSS) are enriched in low complexity. Basic and acidic residues predominate over residues 323-339 (VKVDNADQHANLDDSVK). Ser340 is modified (phosphoserine). Residues 340–351 (SRSRSPIRRRNQ) show a composition bias toward basic residues. The span at 352–365 (NSRSKSPSRSPVRV) shows a compositional bias: low complexity. 2 stretches are compositionally biased toward basic and acidic residues: residues 387-397 (SPREKPTEETV) and 437-467 (SPPR…ERSP). Positions 468 to 490 (RGRFRSPPRRRSPPRYNRRRRST) are enriched in basic residues. A compositionally biased stretch (basic and acidic residues) spans 495 to 505 (DGYRRRLRDGS). Residues 509–523 (SPRHRSRSQSPRKRQ) show a composition bias toward basic residues. Low complexity predominate over residues 546–555 (SPAESLSPSH).

It belongs to the cyclophilin-type PPIase family. As to quaternary structure, interacts with SNRNP35, RNU1, SCL28, SCL30, SR30 and SR34. The binding to SR34 is phosphorylation-dependent. Ubiquitous.

It is found in the nucleus. Its subcellular location is the nucleoplasm. The protein localises to the nucleus speckle. It catalyses the reaction [protein]-peptidylproline (omega=180) = [protein]-peptidylproline (omega=0). In terms of biological role, PPIases accelerate the folding of proteins. It catalyzes the cis-trans isomerization of proline imidic peptide bonds in oligopeptides. May be implicated in the folding, transport, and assembly of proteins. Probably involved in early steps of spliceosomal assembly. This is Peptidyl-prolyl cis-trans isomerase CYP63 (CYP63) from Arabidopsis thaliana (Mouse-ear cress).